The chain runs to 1170 residues: MAAALGASGGAGAGDDDFDQFDKPGAERSWRRRAADEDWDSELEDDLLGEDLLSGKKNQSDLSDEELNDDLLQSDNEDEENFSSQGVTISLNATSGMVTSFELSDNTNDQSGEQESEYEQEQGEDELVYHKSDGSELYTQEYPEEGQYEGHEAELTEDQIEYVEEPEEEQLYTDEVLDIEINEPLDEFTGGMETLELQKDIKEESDEEEEDDEESGRLRFKTERKEGTIIRLSDVTRERRNIPETLELSAEAKAALLEFEERERQHKQGRYSSRRGGRRGGPLMCRGVGDQRRESTERGRMKDHRPALLPTQPPVVPQAPPPPPPPPQQQPIRSLFQPQPLQPLLPVQHPHHPSPPQGMHMPPQLETPRMMMTPPPVTPQQPKNIHINPHFKGTVVTPVQVPLLPVPSQPRPAVGPQRFPGPPEFPQHTPGPVPNSFSQPPRLPLQDQWRAPPPPQDRDPFFLGVSGEPRFPSHLFLEQRSPPPPPPPPTLLNSSHPVPTQSPLPFTQPGPAFNQQGQQPVFPRERPVRPALQPPGPVGILHFSQPGSATTRPFIPPRQPFLPGPGQPFLPTHTQPNLQGPLHPPLPPPHQPQPQQPQQQPPPQHQPPHQPPHQPPPQHQPPPQHPPQHPPQHQHHHHHHHLSVPPPPLMPMSQPQFRPHVQTAQPQASSSRMQCPQRQGLRHNTTSQNVSKRPMQQMQPTAPRNSNLRELPIAPSHVIEMSSSRCSATPSAQVKPIVSASPPSRAVAGSRSSQGKTEVKVKPASPVAQPKEEAKTETEFPDEDEETRLYRLKIEEQKRLREEILKQKELRRQQQAGARKKELLERLAQQQQQLYAPPPPAEQEEQALSPSPTNGNPLLPFPGAQVRQNVKNRLLVKNQDVSISNVQPKTSNFVPSSANMQYQGQQMKALKHLRQTRTVPQSQTQPLHKVLPIKPADVEEPAVPQTPRVASIQGRPQDTKPGVKRTVTHRTNSGGGDGPHISSKVRVIKLSGGGGESDGFFHPEGQPQRLPQPPEVGPQPARKVTLTRGGLQQPPHLPAGPHAHSPVPPGIKSIQGIHPAKKAIMHGRGRGVAGPMGRGRLMPNKQNLRVVECKPQPCVVSVEGLSSSTTDAQLKSLLMSVGPIQSLQMLPQQRKAIAKFKEPAHALAFQQKFHRHMIDLSHINVALIVE.

2 disordered regions span residues 1-152 and 199-221; these read MAAA…EGHE and KDIK…LRFK. Residue Ala2 is modified to N-acetylalanine. The segment covering 20–36 has biased composition (basic and acidic residues); that stretch reads QFDKPGAERSWRRRAAD. The span at 37-49 shows a compositional bias: acidic residues; sequence EDWDSELEDDLLG. Ser41 carries the phosphoserine modification. Residues 82-108 are compositionally biased toward polar residues; it reads FSSQGVTISLNATSGMVTSFELSDNTN. Acidic residues-rich tracts occupy residues 112–126 and 203–214; these read GEQE…GEDE and EESDEEEEDDEE. Residues Ser205 and Ser233 each carry the phosphoserine modification. Disordered regions lie at residues 259–708, 721–784, 833–863, and 942–1050; these read FEER…NSNL, MSSS…PDED, QLYA…PFPG, and AVPQ…VPPG. Residues 267-278 are compositionally biased toward basic residues; the sequence is KQGRYSSRRGGR. The span at 289–306 shows a compositional bias: basic and acidic residues; sequence GDQRRESTERGRMKDHRP. Residues 311 to 329 show a composition bias toward pro residues; the sequence is TQPPVVPQAPPPPPPPPQQ. Composition is skewed to low complexity over residues 335–348, 357–372, and 394–403; these read LFQP…LPVQ, QGMH…RMMM, and TVVTPVQVPL. Residues 419–433 show a composition bias toward pro residues; sequence FPGPPEFPQHTPGPV. At Arg470 the chain carries Asymmetric dimethylarginine. Composition is skewed to pro residues over residues 481–490, 554–568, and 582–630; these read SPPPPPPPPT, FIPP…PGQP, and LHPP…PQHP. The segment covering 632 to 642 has biased composition (basic residues); that stretch reads QHQHHHHHHHL. Composition is skewed to polar residues over residues 662 to 708 and 721 to 732; these read QTAQ…NSNL and MSSSRCSATPSA. Phosphoserine occurs at positions 741 and 765. The stretch at 789–835 forms a coiled coil; that stretch reads LYRLKIEEQKRLREEILKQKELRRQQQAGARKKELLERLAQQQQQLY. Ser951 is modified (phosphoserine). Lys960 participates in a covalent cross-link: Glycyl lysine isopeptide (Lys-Gly) (interchain with G-Cter in SUMO2). Ser973 and Ser991 each carry phosphoserine. Residue Arg1028 is modified to Asymmetric dimethylarginine; alternate. Position 1028 is an omega-N-methylarginine; alternate (Arg1028). Positions 1098 to 1170 constitute an RRM domain; it reads CVVSVEGLSS…SHINVALIVE (73 aa).

In terms of assembly, associates with the NXF1-NXT1 RNA export complex. Interacts with ALKBH5; facilitating ALKBH5 recruitment to m6A-containing transcripts. Interacts with SENP1; promoting ALKBH5 deSUMOylation and subsequent activation.

The protein resides in the nucleus. The protein localises to the cytoplasm. Functionally, RNA reader protein, which recognizes and binds specific RNAs, thereby regulating RNA metabolic processes, such as mRNA export, mRNA stability and/or translation. Binds a subset of intronless RNAs containing GC-rich elements, such as NORAD, and promotes their nuclear export by recruiting target RNAs to components of the NXF1-NXT1 RNA export machinery. Specifically recognizes and binds N6-methyladenosine (m6A)-containing mRNAs, promoting their demethylation by ALKBH5. Acts as an molecular adapter, which (1) promotes ALKBH5 recruitment to m6A-containing transcripts and (2) activates ALKBH5 demethylase activity by recruiting SENP1, leading to ALKBH5 deSUMOylation and subsequent activation. In Homo sapiens (Human), this protein is RNA-binding protein 33.